Here is a 166-residue protein sequence, read N- to C-terminus: ATP synthase subunit b (166 aa).

The helical transmembrane segment at 15 to 37 threads the bilayer; that stretch reads TLYYLLIFAALLLLVKHFAWGPV.

This sequence belongs to the ATPase B chain family. In terms of assembly, F-type ATPases have 2 components, F(1) - the catalytic core - and F(0) - the membrane proton channel. F(1) has five subunits: alpha(3), beta(3), gamma(1), delta(1), epsilon(1). F(0) has three main subunits: a(1), b(2) and c(10-14). The alpha and beta chains form an alternating ring which encloses part of the gamma chain. F(1) is attached to F(0) by a central stalk formed by the gamma and epsilon chains, while a peripheral stalk is formed by the delta and b chains.

The protein localises to the cell membrane. In terms of biological role, f(1)F(0) ATP synthase produces ATP from ADP in the presence of a proton or sodium gradient. F-type ATPases consist of two structural domains, F(1) containing the extramembraneous catalytic core and F(0) containing the membrane proton channel, linked together by a central stalk and a peripheral stalk. During catalysis, ATP synthesis in the catalytic domain of F(1) is coupled via a rotary mechanism of the central stalk subunits to proton translocation. Its function is as follows. Component of the F(0) channel, it forms part of the peripheral stalk, linking F(1) to F(0). The chain is ATP synthase subunit b from Lactobacillus gasseri (strain ATCC 33323 / DSM 20243 / BCRC 14619 / CIP 102991 / JCM 1131 / KCTC 3163 / NCIMB 11718 / NCTC 13722 / AM63).